The chain runs to 250 residues: AA9 family lytic polysaccharide monooxygenase E (250 aa).

Residues 1 to 21 form the signal peptide; it reads MAMSKIMSLTGLLASASLVAG. 2 residues coordinate Cu(2+): histidine 22 and histidine 107. 2 disulfide bridges follow: cysteine 77–cysteine 199 and cysteine 118–cysteine 122. A glycan (N-linked (GlcNAc...) asparagine) is linked at asparagine 159. O2-binding residues include histidine 185 and glutamine 194. Tyrosine 196 is a Cu(2+) binding site.

This sequence belongs to the polysaccharide monooxygenase AA9 family. Cu(2+) is required as a cofactor.

The protein localises to the secreted. It catalyses the reaction [(1-&gt;4)-beta-D-glucosyl]n+m + reduced acceptor + O2 = 4-dehydro-beta-D-glucosyl-[(1-&gt;4)-beta-D-glucosyl]n-1 + [(1-&gt;4)-beta-D-glucosyl]m + acceptor + H2O.. Functionally, lytic polysaccharide monooxygenase (LPMO) that depolymerizes crystalline and amorphous polysaccharides via the oxidation of scissile alpha- or beta-(1-4)-glycosidic bonds, yielding C1 or C4 oxidation products. Catalysis by LPMOs requires the reduction of the active-site copper from Cu(II) to Cu(I) by a reducing agent and H(2)O(2) or O(2) as a cosubstrate. The sequence is that of AA9 family lytic polysaccharide monooxygenase E from Aspergillus tamarii.